Here is a 370-residue protein sequence, read N- to C-terminus: Ubiquitin carboxyl-terminal hydrolase 12 (370 aa).

The Required for plasma membrane localization of USP12/WDR20 signature appears at Met1–Leu4. The region spanning Phe39–Arg369 is the USP domain. The Nucleophile role is filled by Cys48. Positions Gln146 to Asp157 are enriched in basic and acidic residues. Positions Gln146 to Asp168 are disordered. Zn(2+) contacts are provided by Cys186, Cys189, Cys233, and Cys236. The active-site Proton acceptor is the His317.

The protein belongs to the peptidase C19 family. USP12/USP46 subfamily. In terms of assembly, interacts with WDR48. Interacts with WDR20; this interaction promotes translocation of the USP12 complex to the plasma membrane. Component of the USP12-WDR20-WDR48 deubiquitinating complex. Component of the USP12-DMWD-WDR48 deubiquitinating complex. Interacts with PHLPP1. Interacts with RBPJ. Interacts with CBP; this interaction blocks the acetyltransferase activity of CREBBP. Interacts with ITCH; the interaction is more efficient when both USP12 and WDR48/UAF1 are involved and may mediate recruitment of the USP12 deubiquitinating complex to Notch.

The protein localises to the nucleus. It is found in the cytoplasm. It localises to the cell membrane. It catalyses the reaction Thiol-dependent hydrolysis of ester, thioester, amide, peptide and isopeptide bonds formed by the C-terminal Gly of ubiquitin (a 76-residue protein attached to proteins as an intracellular targeting signal).. Activated by interaction with WDR20, WDR48 and DMWD through different allosteric mechanisms. Functionally, deubiquitinating enzyme that plays various roles in the regulation of the immune response and inflammation. During TCR engagement and activation, translocates into the cytoplasm and deubiquitinates its substrates LAT and TRAT1 and prevents their lysosome-dependent degradation to stabilize the TCR signaling complex at the plasma membrane. Plays an essential role in the selective LPS-induced macrophage response through the activation of NF-kappa-B pathway. In addition, promotes that antiviral immune response through targeting DNA sensor IFI16 to inhibit its proteasome-dependent degradation. Participates in the interferon signaling pathway and antiviral response independently of its deubiquitinase activity by maintaining nuclear phosphorylated STAT1 levels via inhibition of its CREBBP-mediated acetylation and subsequent dephosphorylation. Plays an intrinsic role in promoting the differentiation, activation and proliferation of CD4(+) T-cell by activating the NF-kappa-B signaling pathway through deubiquitinating and stabilizing B-cell lymphoma/leukemia 10/BCL10. In myeloid-derived suppressor cells promotes the activation of the NF-kappa-B via deubiquitination and stabilization of RELA. Regulates the 'Lys-63'-linked polyubiquitin chains of BAX and thereby modulates the mitochondrial apoptotic process. Negative regulator of NOTCH signaling that specifically deubiquitinates non-activated NOTCH receptors to target them for lysosomal degradation; deubiquitination of NOTCH stimulates its transport form late endosomes to lysosomes. Protects neurons against HTT/huntingtin-induced polyglutamine expansion-dependent neurodegeneration through regulation of autophagic flux. This function is independent of deubiquitinase activity or of other components of the USP12-WDR20-WDR48 deubiquitinating complex. In complex with WDR48, acts as a potential tumor suppressor by positively regulating PHLPP1 stability. In Rattus norvegicus (Rat), this protein is Ubiquitin carboxyl-terminal hydrolase 12.